Reading from the N-terminus, the 463-residue chain is Sodium-coupled neutral amino acid transporter 7 (463 aa).

Ser-28 carries the post-translational modification Phosphoserine. 11 helical membrane passes run Ala-56–Phe-76, Val-82–Ile-102, Leu-130–Ile-150, Phe-179–Gly-199, Phe-206–Pro-226, Ala-240–Val-260, Ala-283–Phe-303, Met-320–Leu-340, Val-372–Ile-392, Ile-396–Ile-416, and Ala-429–Phe-449.

The protein belongs to the amino acid/polyamine transporter 2 family. In terms of assembly, interacts with the mTORC1 complex; this interaction mediates the recruitment of mTORC1 to the lysosome and its subsequent activation.

Its subcellular location is the lysosome membrane. It localises to the cell projection. The protein resides in the axon. The enzyme catalyses L-asparagine(in) + Na(+)(in) = L-asparagine(out) + Na(+)(out). It catalyses the reaction L-glutamine(in) + Na(+)(in) = L-glutamine(out) + Na(+)(out). Functionally, symporter that selectively cotransports sodium ions and amino acids, such as L-glutamine and L-asparagine from the lysosome into the cytoplasm and may participates in mTORC1 activation. The transport activity requires an acidic lysosomal lumen. This chain is Sodium-coupled neutral amino acid transporter 7, found in Bos taurus (Bovine).